Here is a 312-residue protein sequence, read N- to C-terminus: Ornithine carbamoyltransferase (312 aa).

Carbamoyl phosphate is bound by residues 57–60 (STRT), glutamine 84, arginine 108, and 135–138 (HPCQ). Residues asparagine 166, aspartate 226, and 230-231 (SM) contribute to the L-ornithine site. Carbamoyl phosphate-binding positions include 265-266 (CL) and arginine 293.

Belongs to the aspartate/ornithine carbamoyltransferase superfamily. OTCase family.

The protein resides in the cytoplasm. It catalyses the reaction carbamoyl phosphate + L-ornithine = L-citrulline + phosphate + H(+). It participates in amino-acid degradation; L-arginine degradation via ADI pathway; carbamoyl phosphate from L-arginine: step 2/2. Reversibly catalyzes the transfer of the carbamoyl group from carbamoyl phosphate (CP) to the N(epsilon) atom of ornithine (ORN) to produce L-citrulline. The protein is Ornithine carbamoyltransferase of Brucella abortus (strain 2308).